Reading from the N-terminus, the 1167-residue chain is Pesticidal crystal protein Cry21Aa (1167 aa).

Belongs to the delta endotoxin family.

Endotoxin with nematicidal activity. In Bacillus thuringiensis, this protein is Pesticidal crystal protein Cry21Aa (cry21Aa).